We begin with the raw amino-acid sequence, 234 residues long: Ribosome-inactivating protein lychnin (234 aa).

Cys-32 and Cys-115 are disulfide-bonded. Glu-170 is a catalytic residue.

Monomer.

The catalysed reaction is Endohydrolysis of the N-glycosidic bond at one specific adenosine on the 28S rRNA.. Its function is as follows. Ribosome-inactivating protein of type 1, inhibits protein synthesis in animal cells. Inhibits cell-free translation in rabbit reticulocyte lysate system with an IC(50) of 0.17 nM. This is Ribosome-inactivating protein lychnin from Silene chalcedonica (Maltese-cross).